A 431-amino-acid chain; its full sequence is Trigger factor (431 aa).

Residues 158–243 (GDLVAVETWS…VAEVSEPVVP (86 aa)) enclose the PPIase FKBP-type domain.

The protein belongs to the FKBP-type PPIase family. Tig subfamily.

It localises to the cytoplasm. The enzyme catalyses [protein]-peptidylproline (omega=180) = [protein]-peptidylproline (omega=0). Its function is as follows. Involved in protein export. Acts as a chaperone by maintaining the newly synthesized protein in an open conformation. Functions as a peptidyl-prolyl cis-trans isomerase. The chain is Trigger factor from Stenotrophomonas maltophilia (strain R551-3).